Reading from the N-terminus, the 151-residue chain is Large ribosomal subunit protein bL9 (151 aa).

Belongs to the bacterial ribosomal protein bL9 family.

Binds to the 23S rRNA. This Desulfosudis oleivorans (strain DSM 6200 / JCM 39069 / Hxd3) (Desulfococcus oleovorans) protein is Large ribosomal subunit protein bL9.